The sequence spans 30 residues: Pyrrole-2-carboxylate oxygenase (30 aa).

As to quaternary structure, homotrimer. FAD serves as cofactor.

It carries out the reaction pyrrole-2-carboxylate + NADH + O2 + H(+) = 5-hydroxypyrrole-2-carboxylate + NAD(+) + H2O. Its function is as follows. Monooxygenase that initiates the degradation of pyrrole-2-carboxylate, which allows Arthrobacter sp. strain Py1 to grow on pyrrole-2-carboxylate as sole carbon, nitrogen, and energy source. To a lesser extent, can also use pyrrole, pyrrole-2-aldehyde, and indole-2-carboxylate as substrate. The protein is Pyrrole-2-carboxylate oxygenase of Arthrobacter sp. (strain Py1).